Here is a 458-residue protein sequence, read N- to C-terminus: ATP synthase subunit beta (458 aa).

ATP is bound at residue 148 to 155 (GGAGVGKT).

Belongs to the ATPase alpha/beta chains family. F-type ATPases have 2 components, CF(1) - the catalytic core - and CF(0) - the membrane proton channel. CF(1) has five subunits: alpha(3), beta(3), gamma(1), delta(1), epsilon(1). CF(0) has three main subunits: a(1), b(2) and c(9-12). The alpha and beta chains form an alternating ring which encloses part of the gamma chain. CF(1) is attached to CF(0) by a central stalk formed by the gamma and epsilon chains, while a peripheral stalk is formed by the delta and b chains.

It is found in the cell inner membrane. The enzyme catalyses ATP + H2O + 4 H(+)(in) = ADP + phosphate + 5 H(+)(out). Produces ATP from ADP in the presence of a proton gradient across the membrane. The catalytic sites are hosted primarily by the beta subunits. The polypeptide is ATP synthase subunit beta (Shewanella halifaxensis (strain HAW-EB4)).